We begin with the raw amino-acid sequence, 546 residues long: NRAMP-like transporter smf-2 (546 aa).

Residues 1–42 (MPGFQNANISDLAPPAREKTFDDTIAVKIPEDEKNTWFSWRK) are Cytoplasmic-facing. A helical membrane pass occupies residues 43 to 63 (LWAFTGPGFLMSIAYLDPGNI). At 64 to 70 (ESDLQAG) the chain is on the extracellular side. A helical transmembrane segment spans residues 71–91 (AQAEYKLLWVLLVSHIVGMLL). Topologically, residues 92 to 119 (QRMSARLGVVSGKHMAEIAYDYYPLVPR) are cytoplasmic. The chain crosses the membrane as a helical span at residues 120 to 140 (IILWLMIEIAIVCSDMQEVIG). Over 141–152 (TAIAIYLLSSGK) the chain is Extracellular. The chain crosses the membrane as a helical span at residues 153-173 (IPLLVGVLITILDTFTFLFID). Residues 174 to 181 (RYGIRKLE) are Cytoplasmic-facing. The helical transmembrane segment at 182 to 202 (FIFVALISTMAISFGYEFVVM) threads the bilayer. The Extracellular segment spans residues 203-228 (KPVLTKVLTGTVVPWCSGCGKEEIIT). A helical membrane pass occupies residues 229–249 (AISIFGAVIMPHNFYLHSALV). Residues 250-270 (KSRKVDRSSKTRIAEANKYFS) are Cytoplasmic-facing. The helical transmembrane segment at 271 to 291 (IESAFALSVSFFINLFVLSVF) threads the bilayer. At 292–334 (ARGLYQKTNGDVNSMCLSHNDIPDSNVFPNNTSSVTVDLFQGG) the chain is on the extracellular side. N-linked (GlcNAc...) asparagine glycosylation occurs at asparagine 321. A helical transmembrane segment spans residues 335-355 (IYLGCQFGLFAMIIWAIGIFA). At 356–386 (AGQSSTMTGTYTGQFVMEGFVRISWPKWKRV) the chain is on the cytoplasmic side. A helical membrane pass occupies residues 387–407 (LITRAVAITPTLILCIKAHGI). Over 408-415 (KNLTGMND) the chain is Extracellular. N-linked (GlcNAc...) asparagine glycosylation occurs at asparagine 409. A helical membrane pass occupies residues 416–436 (FLNCVQMVQLPFALIPMITFT). Residues 437 to 453 (SSKRIMHNFRTSKPLQY) are Cytoplasmic-facing. Residues 454–474 (FSIICGIITIGINVYFIFQYV) form a helical membrane-spanning segment. At 475–483 (TENFGTGWL) the chain is on the extracellular side. A helical transmembrane segment spans residues 484–504 (IFVIIGPFTLLYIAFILYLAI). At 505–546 (YCLVACELMNDTVNLPGFDFHRTLELDAPWITETFVVNDVYF) the chain is on the cytoplasmic side.

This sequence belongs to the NRAMP family. Expressed in dopaminergic neurons (at protein level). Primarily expressed in mc1, mc2 and mc3 epithelial cells of the pharynx and vpil-6 pharyngeal-intestinal valve cells displaying an anterior-posterior expression gradient. Expressed in gonad sheath cells.

Its subcellular location is the apical cell membrane. It is found in the cytoplasmic vesicle membrane. Probable divalent metal ion transporter which regulates Mn(2+) uptake. This is NRAMP-like transporter smf-2 from Caenorhabditis elegans.